We begin with the raw amino-acid sequence, 570 residues long: Periplasmic trehalase (570 aa).

The first 34 residues, 1–34 (MIPPEIRRSVLLQKAIKLALAGTLLTFASFSATA), serve as a signal peptide directing secretion. Substrate contacts are provided by residues Arg159, 166 to 167 (WD), Asn203, 212 to 214 (RSQ), 284 to 286 (RPE), and Gly317. Catalysis depends on proton donor/acceptor residues Asp319 and Glu503. Glu518 is a substrate binding site. Residues 545–570 (PCDSVPSTRPASLSATPTKTPSAATQ) form a disordered region. The span at 554-570 (PASLSATPTKTPSAATQ) shows a compositional bias: low complexity.

Belongs to the glycosyl hydrolase 37 family. Monomer.

It is found in the periplasm. It catalyses the reaction alpha,alpha-trehalose + H2O = alpha-D-glucose + beta-D-glucose. Its function is as follows. Provides the cells with the ability to utilize trehalose at high osmolarity by splitting it into glucose molecules that can subsequently be taken up by the phosphotransferase-mediated uptake system. The sequence is that of Periplasmic trehalase from Salmonella agona (strain SL483).